We begin with the raw amino-acid sequence, 1173 residues long: BRCA2-interacting transcriptional repressor EMSY (1173 aa).

Residues C16–V100 enclose the ENT domain. A compositionally biased stretch (low complexity) spans S149–S177. Disordered stretches follow at residues S149–V179, K191–V216, N676–P720, S797–A816, R905–V998, P1020–S1046, and D1139–Q1173. Low complexity predominate over residues T683–A693. Composition is skewed to low complexity over residues S911 to S921 and S937 to T953. Polar residues-rich tracts occupy residues Q961–S976 and S989–V998. Residues S1025–S1040 show a composition bias toward low complexity. The segment covering E1148–N1159 has biased composition (acidic residues).

Homodimer.

It is found in the nucleus. Functionally, regulator which is able to repress transcription, possibly via its interaction with a multiprotein chromatin remodeling complex that modifies the chromatin. This is BRCA2-interacting transcriptional repressor EMSY from Danio rerio (Zebrafish).